We begin with the raw amino-acid sequence, 347 residues long: Phenylalanine--tRNA ligase alpha subunit (347 aa).

Glutamate 259 lines the Mg(2+) pocket.

This sequence belongs to the class-II aminoacyl-tRNA synthetase family. Phe-tRNA synthetase alpha subunit type 1 subfamily. In terms of assembly, tetramer of two alpha and two beta subunits. Mg(2+) serves as cofactor.

It localises to the cytoplasm. It catalyses the reaction tRNA(Phe) + L-phenylalanine + ATP = L-phenylalanyl-tRNA(Phe) + AMP + diphosphate + H(+). The chain is Phenylalanine--tRNA ligase alpha subunit from Oenococcus oeni (strain ATCC BAA-331 / PSU-1).